The following is a 377-amino-acid chain: uncharacterized protein (377 aa).

Residues 1–46 form a disordered region; that stretch reads MLAGLRRRGSMTTPPGPEIPPPHQGGFYSAGHHPQRPWPETPPPKT. 2 stretches are compositionally biased toward pro residues: residues 14-23 and 36-45; these read PPGPEIPPPH and RPWPETPPPK. The helical transmembrane segment at 53 to 73 threads the bilayer; that stretch reads MLGAVALLAVVGVTVAVTLAV. The disordered stretch occupies residues 77–107; the sequence is DKRDAIPPGSGVSGSPTASDIASADDSGPVS.

It is found in the cell inner membrane. In terms of biological role, may be involved in the ESX-1 / type VII specialized secretion system (T7SS), which exports several proteins including EsxA and EsxB. Involved in DNA conjugation in the recipient strain. This is an uncharacterized protein from Mycolicibacterium smegmatis (strain MKD8) (Mycobacterium smegmatis).